Consider the following 445-residue polypeptide: Exodeoxyribonuclease 7 large subunit (445 aa).

The protein belongs to the XseA family. Heterooligomer composed of large and small subunits.

The protein localises to the cytoplasm. The enzyme catalyses Exonucleolytic cleavage in either 5'- to 3'- or 3'- to 5'-direction to yield nucleoside 5'-phosphates.. Bidirectionally degrades single-stranded DNA into large acid-insoluble oligonucleotides, which are then degraded further into small acid-soluble oligonucleotides. The protein is Exodeoxyribonuclease 7 large subunit of Xanthomonas oryzae pv. oryzae (strain PXO99A).